Consider the following 424-residue polypeptide: Na(+)/H(+) antiporter NhaA (424 aa).

A run of 11 helical transmembrane segments spans residues 23–43 (ILLI…LATL), 65–85 (VHLW…GLEI), 102–122 (LPFI…MFFV), 131–151 (GWAI…ALLG), 160–180 (LFLV…IALF), 183–203 (AKIN…MFAC), 211–231 (LLVY…SGVH), 265–285 (ALHP…NAGV), 303–323 (IAAG…WLAV), 341–361 (AVSM…SLAF), and 373–393 (IGIL…LRLA).

The protein belongs to the NhaA Na(+)/H(+) (TC 2.A.33) antiporter family.

It is found in the cell inner membrane. The catalysed reaction is Na(+)(in) + 2 H(+)(out) = Na(+)(out) + 2 H(+)(in). In terms of biological role, na(+)/H(+) antiporter that extrudes sodium in exchange for external protons. The protein is Na(+)/H(+) antiporter NhaA of Sphingopyxis alaskensis (strain DSM 13593 / LMG 18877 / RB2256) (Sphingomonas alaskensis).